A 700-amino-acid polypeptide reads, in one-letter code: Putative glutamine-dependent NAD(+) synthetase (700 aa).

Positions 5–275 (VTIASCQLNQ…VEVISATVDV (271 aa)) constitute a CN hydrolase domain. The Proton acceptor; for glutaminase activity role is filled by glutamate 45. The active-site For glutaminase activity is lysine 114. The active-site Nucleophile; for glutaminase activity is the cysteine 175. The tract at residues 327-700 (IPLPEEEITF…ASKFEQHQRK (374 aa)) is ligase. 357–364 (PLSGGLDS) contacts ATP. Serine 359 is an active-site residue.

The protein in the C-terminal section; belongs to the NAD synthetase family.

It carries out the reaction deamido-NAD(+) + L-glutamine + ATP + H2O = L-glutamate + AMP + diphosphate + NAD(+) + H(+). Its pathway is cofactor biosynthesis; NAD(+) biosynthesis; NAD(+) from deamido-NAD(+) (L-Gln route): step 1/1. In Schizosaccharomyces pombe (strain 972 / ATCC 24843) (Fission yeast), this protein is Putative glutamine-dependent NAD(+) synthetase.